Reading from the N-terminus, the 340-residue chain is Phosphoribosylformylglycinamidine cyclo-ligase (340 aa).

The protein belongs to the AIR synthase family.

The protein localises to the cytoplasm. It carries out the reaction 2-formamido-N(1)-(5-O-phospho-beta-D-ribosyl)acetamidine + ATP = 5-amino-1-(5-phospho-beta-D-ribosyl)imidazole + ADP + phosphate + H(+). The protein operates within purine metabolism; IMP biosynthesis via de novo pathway; 5-amino-1-(5-phospho-D-ribosyl)imidazole from N(2)-formyl-N(1)-(5-phospho-D-ribosyl)glycinamide: step 2/2. The chain is Phosphoribosylformylglycinamidine cyclo-ligase from Streptococcus pneumoniae serotype 19F (strain G54).